Reading from the N-terminus, the 1802-residue chain is Signaling mucin HKR1 (1802 aa).

Residues 1–21 (MVSLKIKKILLLVSLLNAIEA) form the signal peptide. At 22–1485 (YSNDTIYSTS…SASAGKYAVK (1464 aa)) the chain is on the extracellular side. N-linked (GlcNAc...) asparagine glycosylation occurs at Asn24. Disordered regions lie at residues 47 to 176 (ISST…PREI) and 261 to 311 (YSSS…VSRP). Residues 54–81 (NKENAITSSSETTTMAGQYGESGSTTIM) are compositionally biased toward polar residues. The span at 88-107 (TSSQYISVTTTTQTSDTMSS) shows a compositional bias: low complexity. Residues 113 to 143 (EIATPSSSIVPTPLQSYSDESQISQTLSHNP) are compositionally biased toward polar residues. Low complexity-rich tracts occupy residues 145–172 (SVAE…SSAV) and 261–302 (YSSS…SESS). A 1; approximate repeat occupies 453–480 (SVPVAVSSTYTSSPSASVVVPSAYASSP). A 12 X 28 AA tandem repeats of S-[AV]-[P]-V-A-V-S-S-T-Y-T-S-S-P-S-A-P-A-A-I-S-S-T-Y-T-S-S-P region spans residues 453-788 (SVPVAVSSTY…VLSSTSTSSP (336 aa)). Tandem repeats lie at residues 481–508 (SVPV…TSSP), 509–536 (SAPV…TSSP), 537–564 (SAPV…TSSP), 565–592 (SAPV…TSSP), 593–620 (SVPV…TSSP), 621–648 (SAPV…TSSP), 649–676 (SVPV…TSSP), 677–704 (SVPV…TSSP), 705–732 (SAPV…TSSP), 733–760 (SAPV…TSSP), and 761–788 (SAPV…TSSP). 2 disordered regions span residues 961–984 (SLQS…TETS) and 1067–1165 (ETIP…SYSR). Composition is skewed to polar residues over residues 970 to 984 (TKNP…TETS) and 1071 to 1123 (ASKS…TNTK). Low complexity predominate over residues 1136 to 1165 (TMGENGEETGLTTTKTQYKSSSETSGSYSR). Asn1252, Asn1293, Asn1342, and Asn1400 each carry an N-linked (GlcNAc...) asparagine glycan. A helical membrane pass occupies residues 1486-1506 (IIIFLIVLTIGVLLWLFVAFF). At 1507-1802 (AFRHRNILLK…KQQNHQTTKI (296 aa)) the chain is on the cytoplasmic side. Residues 1534-1559 (ESTELSRSSSGNQVYNEKPPESENES) form a disordered region.

The protein belongs to the HKR1/MSB2 family. Could be O-glycosylated in the serine/threonine-rich domain.

It is found in the cell membrane. In terms of biological role, plasma membrane signaling mucin that promotes activation of the MAPK for the filamentous growth pathway. May regulate beta-glucan synthesis. Overexpression provides resistance to HM-1 killer toxin. The sequence is that of Signaling mucin HKR1 (HKR1) from Saccharomyces cerevisiae (strain ATCC 204508 / S288c) (Baker's yeast).